The primary structure comprises 587 residues: GATA zinc finger domain-containing protein 3 (587 aa).

The segment covering 53-74 (NINNNINNNNNNNNNNNNNNIN) has biased composition (low complexity). 3 disordered regions span residues 53–141 (NINN…LKIP), 179–294 (QLAH…SSPS), and 312–392 (QTSP…ATIN). Residues 75–86 (QYHQNHYDQYSD) are compositionally biased toward polar residues. Low complexity-rich tracts occupy residues 87 to 136 (NNCN…NNNN), 183 to 202 (NSSM…TPTS), 237 to 264 (NING…INNG), 272 to 292 (GNNN…NSSS), and 316 to 333 (SQQS…QQSQ). 2 stretches are compositionally biased toward polar residues: residues 340–358 (INTT…TNSP) and 365–379 (NESS…TPLS). The GATA-type zinc-finger motif lies at 500–525 (CIFCGTMETPEWRKGPGGHKTLCNAC). A disordered region spans residues 536 to 587 (ENQNNGGSPNPQQNNVTTTTTTTTSTSTNSPNSNGNNFSPESAMSVSKLISD). A compositionally biased stretch (low complexity) spans 538-575 (QNNGGSPNPQQNNVTTTTTTTTSTSTNSPNSNGNNFSP). Over residues 577–587 (SAMSVSKLISD) the composition is skewed to polar residues.

This Dictyostelium discoideum (Social amoeba) protein is GATA zinc finger domain-containing protein 3 (gtaC).